A 91-amino-acid polypeptide reads, in one-letter code: MVKLRLKRCGRKQRAVYRIVAIDARSRREGRDLRKVGFYDPIKNQTYSNVPAILYFLEKGAQPTGTVHDISKKAEVFTELRLNQTKFKFNQ.

The protein belongs to the bacterial ribosomal protein bS16 family.

Its subcellular location is the plastid. It localises to the chloroplast. The protein is Small ribosomal subunit protein bS16c of Vitis vinifera (Grape).